The following is a 389-amino-acid chain: Succinate--CoA ligase [ADP-forming] subunit beta (389 aa).

The 236-residue stretch at 9 to 244 (KQLFADYGLP…ETQEDPREVE (236 aa)) folds into the ATP-grasp domain. ATP contacts are provided by residues K46, 53-55 (GRG), E99, G102, and E107. Mg(2+) contacts are provided by N199 and D213. Residues N264 and 321 to 323 (GIV) contribute to the substrate site.

It belongs to the succinate/malate CoA ligase beta subunit family. As to quaternary structure, heterotetramer of two alpha and two beta subunits. Mg(2+) is required as a cofactor.

The catalysed reaction is succinate + ATP + CoA = succinyl-CoA + ADP + phosphate. It carries out the reaction GTP + succinate + CoA = succinyl-CoA + GDP + phosphate. Its pathway is carbohydrate metabolism; tricarboxylic acid cycle; succinate from succinyl-CoA (ligase route): step 1/1. Succinyl-CoA synthetase functions in the citric acid cycle (TCA), coupling the hydrolysis of succinyl-CoA to the synthesis of either ATP or GTP and thus represents the only step of substrate-level phosphorylation in the TCA. The beta subunit provides nucleotide specificity of the enzyme and binds the substrate succinate, while the binding sites for coenzyme A and phosphate are found in the alpha subunit. The polypeptide is Succinate--CoA ligase [ADP-forming] subunit beta (Tolumonas auensis (strain DSM 9187 / NBRC 110442 / TA 4)).